The sequence spans 92 residues: Small ribosomal subunit protein uS19 (92 aa).

Belongs to the universal ribosomal protein uS19 family.

Its function is as follows. Protein S19 forms a complex with S13 that binds strongly to the 16S ribosomal RNA. This is Small ribosomal subunit protein uS19 from Rhodopseudomonas palustris (strain HaA2).